The sequence spans 405 residues: Tryptophan synthase beta chain (405 aa).

Lys98 is modified (N6-(pyridoxal phosphate)lysine).

The protein belongs to the TrpB family. As to quaternary structure, tetramer of two alpha and two beta chains. It depends on pyridoxal 5'-phosphate as a cofactor.

It catalyses the reaction (1S,2R)-1-C-(indol-3-yl)glycerol 3-phosphate + L-serine = D-glyceraldehyde 3-phosphate + L-tryptophan + H2O. It functions in the pathway amino-acid biosynthesis; L-tryptophan biosynthesis; L-tryptophan from chorismate: step 5/5. The beta subunit is responsible for the synthesis of L-tryptophan from indole and L-serine. The protein is Tryptophan synthase beta chain of Xanthomonas axonopodis pv. citri (strain 306).